We begin with the raw amino-acid sequence, 421 residues long: MIPFSLKNGTLCVEDIPLPEIAAQYGTPCYVYSHSYLTERARRFTKALDGAGKGKSLVAFAVKANPSQAILASFAKEGLGADVVSAGEIRRAVHAGIPPERIVFSGVGKTAEEMRYALEIGIGQFNIESVSEIEMLAEVATSLGKKAAVALRINPDVDPHTHAKIATGKADTKFGIAAEDALSAYEKLASYPSLKIQGIASHIGSQITDLAPFEAAAERIYEIITALEKAGHAIETADLGGGLGVRYKDDQPEPPSVEAYGEMIKRVTKGWNCRLIFEPGRSLIANAGVLLSKVIRIKESKTARFVILDAAMNDLVRPTLYDAYHEIKAVTPSAQTYQADIVGPVCETGDIFARNRSISAVKADDLMAIMSAGAYGATMASAYNSRPLVAEVMVSGNKSALIRKRQSVEDLMRDEQKVEWL.

Lys-63 is subject to N6-(pyridoxal phosphate)lysine. Pyridoxal 5'-phosphate-binding positions include Gly-242 and Glu-278 to Arg-281. 3 residues coordinate substrate: Arg-281, Arg-317, and Tyr-321. Cys-346 (proton donor) is an active-site residue. 2 residues coordinate substrate: Glu-347 and Tyr-375. Tyr-375 is a binding site for pyridoxal 5'-phosphate.

The protein belongs to the Orn/Lys/Arg decarboxylase class-II family. LysA subfamily. As to quaternary structure, homodimer. It depends on pyridoxal 5'-phosphate as a cofactor.

It catalyses the reaction meso-2,6-diaminopimelate + H(+) = L-lysine + CO2. It functions in the pathway amino-acid biosynthesis; L-lysine biosynthesis via DAP pathway; L-lysine from DL-2,6-diaminopimelate: step 1/1. Functionally, specifically catalyzes the decarboxylation of meso-diaminopimelate (meso-DAP) to L-lysine. The sequence is that of Diaminopimelate decarboxylase from Zymomonas mobilis subsp. mobilis (strain ATCC 31821 / ZM4 / CP4).